Consider the following 149-residue polypeptide: Calmodulin (149 aa).

Position 2 is an N-acetylalanine (Ala2). EF-hand domains follow at residues 8–43, 44–79, 81–116, and 117–149; these read EQIA…LGQN, PTEA…KMKD, DSEE…LGEK, and LTDE…MTNK. The Ca(2+) site is built by Asp21, Asp23, Asp25, Thr27, Glu32, Asp57, Asp59, Asn61, Thr63, Glu68, Asp94, Asp96, Asn98, and Glu105. Lys116 carries the N6,N6,N6-trimethyllysine modification. Asp130, Asp132, Asp134, Gln136, and Glu141 together coordinate Ca(2+).

Belongs to the calmodulin family.

Functionally, calmodulin mediates the control of a large number of enzymes, ion channels and other proteins by Ca(2+). Among the enzymes to be stimulated by the calmodulin-Ca(2+) complex are a number of protein kinases and phosphatases. The sequence is that of Calmodulin from Ciona intestinalis (Transparent sea squirt).